The chain runs to 382 residues: Dual-specificity RNA methyltransferase RlmN (382 aa).

E96 (proton acceptor) is an active-site residue. In terms of domain architecture, Radical SAM core spans 102–342 (QGKRGTLCVS…VRTTRGEDID (241 aa)). Residues C109 and C345 are joined by a disulfide bond. Residues C116, C120, and C123 each coordinate [4Fe-4S] cluster. S-adenosyl-L-methionine-binding positions include 170–171 (GE), S202, 224–226 (SLH), and N302. Residue C345 is the S-methylcysteine intermediate of the active site.

It belongs to the radical SAM superfamily. RlmN family. The cofactor is [4Fe-4S] cluster.

It is found in the cytoplasm. It carries out the reaction adenosine(2503) in 23S rRNA + 2 reduced [2Fe-2S]-[ferredoxin] + 2 S-adenosyl-L-methionine = 2-methyladenosine(2503) in 23S rRNA + 5'-deoxyadenosine + L-methionine + 2 oxidized [2Fe-2S]-[ferredoxin] + S-adenosyl-L-homocysteine. The catalysed reaction is adenosine(37) in tRNA + 2 reduced [2Fe-2S]-[ferredoxin] + 2 S-adenosyl-L-methionine = 2-methyladenosine(37) in tRNA + 5'-deoxyadenosine + L-methionine + 2 oxidized [2Fe-2S]-[ferredoxin] + S-adenosyl-L-homocysteine. Its function is as follows. Specifically methylates position 2 of adenine 2503 in 23S rRNA and position 2 of adenine 37 in tRNAs. m2A2503 modification seems to play a crucial role in the proofreading step occurring at the peptidyl transferase center and thus would serve to optimize ribosomal fidelity. This is Dual-specificity RNA methyltransferase RlmN from Pseudomonas syringae pv. tomato (strain ATCC BAA-871 / DC3000).